Consider the following 434-residue polypeptide: Serine/threonine-protein kinase Sgk1-B (434 aa).

A disordered region spans residues 68 to 94 (ESELLNENSSPPPSHSQQINLGPSSNP). Residues 101–358 (FQFLKIIGKG…FMEIKNHIFF (258 aa)) form the Protein kinase domain. ATP-binding positions include 107-115 (IGKGSFGKV) and Lys130. Residue Asp225 is the Proton acceptor of the active site. Positions 359–434 (SPIDWDDLIN…SYAPPMDSYL (76 aa)) constitute an AGC-kinase C-terminal domain.

The protein belongs to the protein kinase superfamily. AGC Ser/Thr protein kinase family.

The protein localises to the cytoplasm. The protein resides in the nucleus. It is found in the endoplasmic reticulum. It catalyses the reaction L-seryl-[protein] + ATP = O-phospho-L-seryl-[protein] + ADP + H(+). The catalysed reaction is L-threonyl-[protein] + ATP = O-phospho-L-threonyl-[protein] + ADP + H(+). Protein kinase that may play an important role in cellular stress response. Plays an important role in activating certain potassium, sodium, and chloride channels, suggesting an involvement in the regulation of processes such as cell survival, neuronal excitability and renal sodium excretion. In Xenopus laevis (African clawed frog), this protein is Serine/threonine-protein kinase Sgk1-B (sgk1-b).